Reading from the N-terminus, the 136-residue chain is Small ribosomal subunit protein uS19 (136 aa).

The disordered stretch occupies residues 117 to 136 (VQHGDPGMGATRSSMFVPLK).

It belongs to the universal ribosomal protein uS19 family.

Its function is as follows. Protein S19 forms a complex with S13 that binds strongly to the 16S ribosomal RNA. This Methanobrevibacter smithii (strain ATCC 35061 / DSM 861 / OCM 144 / PS) protein is Small ribosomal subunit protein uS19.